Consider the following 299-residue polypeptide: ATP phosphoribosyltransferase (299 aa).

Belongs to the ATP phosphoribosyltransferase family. Long subfamily. In terms of assembly, equilibrium between an active dimeric form, an inactive hexameric form and higher aggregates. Interconversion between the various forms is largely reversible and is influenced by the natural substrates and inhibitors of the enzyme. Mg(2+) serves as cofactor.

It localises to the cytoplasm. It catalyses the reaction 1-(5-phospho-beta-D-ribosyl)-ATP + diphosphate = 5-phospho-alpha-D-ribose 1-diphosphate + ATP. It participates in amino-acid biosynthesis; L-histidine biosynthesis; L-histidine from 5-phospho-alpha-D-ribose 1-diphosphate: step 1/9. Its activity is regulated as follows. Feedback inhibited by histidine. Its function is as follows. Catalyzes the condensation of ATP and 5-phosphoribose 1-diphosphate to form N'-(5'-phosphoribosyl)-ATP (PR-ATP). Has a crucial role in the pathway because the rate of histidine biosynthesis seems to be controlled primarily by regulation of HisG enzymatic activity. This chain is ATP phosphoribosyltransferase, found in Salmonella dublin (strain CT_02021853).